Consider the following 140-residue polypeptide: ATP synthase epsilon chain (140 aa).

The protein belongs to the ATPase epsilon chain family. In terms of assembly, F-type ATPases have 2 components, CF(1) - the catalytic core - and CF(0) - the membrane proton channel. CF(1) has five subunits: alpha(3), beta(3), gamma(1), delta(1), epsilon(1). CF(0) has three main subunits: a, b and c.

It localises to the cell inner membrane. Functionally, produces ATP from ADP in the presence of a proton gradient across the membrane. This chain is ATP synthase epsilon chain, found in Legionella pneumophila (strain Paris).